The following is a 498-amino-acid chain: MRTNPTTSSPVVSTLEEKNLGRIAQIIGPVLDVVFPPGKMPNIYNALVVEGRDTVGQQINVTCEVQQLLGNNRVRAVAMSATDGLMRGMEVIDTGAPLSVPVGGATLGRIFNVLGEPVDNLGPVDTRTTSPIHRSAPAFIQLDTKLSIFETGIKVVDLLAPYRRGGKIGLFGGAGVGKTVLIMELINNIAKAHGGVSVFGGVGERTREGNDLYMEMKESGVINEKNIAESKVALVYGQMNEPPGARMRVGLTALTMAEYFRDVNEQDVLLFIDNIFRFVQAGSEVSALLGRMPSAVGYQPTLSTEMGSLQERITSTKEGSITSIQAVYVPADDLTDPAPATTFAHLDATTVLSRVLAAKGIYPAVDPLDSTSTMLQPRIVGEEHYETAQRVKQTSQRYKELQDIIAILGLDELSEEDRLTVARARKIERFLSQPFFVAEVFTGSPGKYVGLAETIRGFQLILSGELDGLPEQAFYLVGNIDEATAKAMNLEVESKLKK.

172 to 179 (GGAGVGKT) is an ATP binding site.

This sequence belongs to the ATPase alpha/beta chains family. In terms of assembly, F-type ATPases have 2 components, CF(1) - the catalytic core - and CF(0) - the membrane proton channel. CF(1) has five subunits: alpha(3), beta(3), gamma(1), delta(1), epsilon(1). CF(0) has four main subunits: a(1), b(1), b'(1) and c(9-12).

Its subcellular location is the plastid. It localises to the chloroplast thylakoid membrane. It catalyses the reaction ATP + H2O + 4 H(+)(in) = ADP + phosphate + 5 H(+)(out). Produces ATP from ADP in the presence of a proton gradient across the membrane. The catalytic sites are hosted primarily by the beta subunits. This is ATP synthase subunit beta, chloroplastic from Salacca zalacca (Snake palm).